A 118-amino-acid chain; its full sequence is Ribonuclease P protein component (118 aa).

This sequence belongs to the RnpA family. As to quaternary structure, consists of a catalytic RNA component (M1 or rnpB) and a protein subunit.

The enzyme catalyses Endonucleolytic cleavage of RNA, removing 5'-extranucleotides from tRNA precursor.. Its function is as follows. RNaseP catalyzes the removal of the 5'-leader sequence from pre-tRNA to produce the mature 5'-terminus. It can also cleave other RNA substrates such as 4.5S RNA. The protein component plays an auxiliary but essential role in vivo by binding to the 5'-leader sequence and broadening the substrate specificity of the ribozyme. This chain is Ribonuclease P protein component, found in Rickettsia canadensis (strain McKiel).